A 327-amino-acid polypeptide reads, in one-letter code: Lipoyl synthase (327 aa).

Positions 74, 79, 85, 100, 104, 107, and 314 each coordinate [4Fe-4S] cluster. The Radical SAM core domain occupies 86–303 (FSGGTATFMI…AEEGEKMGFK (218 aa)).

It belongs to the radical SAM superfamily. Lipoyl synthase family. Requires [4Fe-4S] cluster as cofactor.

It is found in the cytoplasm. It catalyses the reaction [[Fe-S] cluster scaffold protein carrying a second [4Fe-4S](2+) cluster] + N(6)-octanoyl-L-lysyl-[protein] + 2 oxidized [2Fe-2S]-[ferredoxin] + 2 S-adenosyl-L-methionine + 4 H(+) = [[Fe-S] cluster scaffold protein] + N(6)-[(R)-dihydrolipoyl]-L-lysyl-[protein] + 4 Fe(3+) + 2 hydrogen sulfide + 2 5'-deoxyadenosine + 2 L-methionine + 2 reduced [2Fe-2S]-[ferredoxin]. It functions in the pathway protein modification; protein lipoylation via endogenous pathway; protein N(6)-(lipoyl)lysine from octanoyl-[acyl-carrier-protein]: step 2/2. Its function is as follows. Catalyzes the radical-mediated insertion of two sulfur atoms into the C-6 and C-8 positions of the octanoyl moiety bound to the lipoyl domains of lipoate-dependent enzymes, thereby converting the octanoylated domains into lipoylated derivatives. The sequence is that of Lipoyl synthase from Pseudomonas aeruginosa (strain LESB58).